The primary structure comprises 467 residues: Ribulose bisphosphate carboxylase large chain (467 aa).

Residue 106 and threonine 156 together coordinate substrate. Lysine 158 (proton acceptor) is an active-site residue. Position 160 (lysine 160) interacts with substrate. Mg(2+)-binding residues include lysine 184, aspartate 186, and glutamate 187. The residue at position 184 (lysine 184) is an N6-carboxylysine. Residue histidine 276 is the Proton acceptor of the active site. 3 residues coordinate substrate: arginine 277, histidine 309, and serine 361.

It belongs to the RuBisCO large chain family. Type I subfamily. As to quaternary structure, heterohexadecamer of 8 large chains and 8 small chains. It depends on Mg(2+) as a cofactor.

The protein localises to the plastid. It localises to the chloroplast. It catalyses the reaction 2 (2R)-3-phosphoglycerate + 2 H(+) = D-ribulose 1,5-bisphosphate + CO2 + H2O. It carries out the reaction D-ribulose 1,5-bisphosphate + O2 = 2-phosphoglycolate + (2R)-3-phosphoglycerate + 2 H(+). Its function is as follows. RuBisCO catalyzes two reactions: the carboxylation of D-ribulose 1,5-bisphosphate, the primary event in carbon dioxide fixation, as well as the oxidative fragmentation of the pentose substrate in the photorespiration process. Both reactions occur simultaneously and in competition at the same active site. This chain is Ribulose bisphosphate carboxylase large chain (rbcL), found in Chondrus crispus (Carrageen Irish moss).